We begin with the raw amino-acid sequence, 435 residues long: MQDSLTLNPIARVDGTLNLPGSKSVSNRALLLAAQANGTTRLTNLLDSDDVRHMLTALGQLGVNYRLSADRRSCEIDGLGGPLRADEALTLFLGNAGTAMRPLAAALCLQAQDVTLTGEPRMKERPIGHLVDALRQGGAQIDYLEHEHYPPLRLRGGYQGGDITVDGSVSSQFLTALLMMAPLAPQNSCIRIKGELVSRPYIDITLALMKSFGIEVRHDNYQVFYLTGGSVYRSPGEYLVEGDASSASYFLAAAAIRGGTVRVTGIGRHSVQGDIRFADVLESMGATIRWGNDYIECSRASLHTIDMDMNHIPDAAMTIATTALFASGGTTTLRNIANWRVKETDRLTAMATELRKVGATVIEGEDYLTVTPSARLSAARIGTYNDHRMAMCFALVALSDTPVTILDPQCTHKTFPDFFARLSALSTPASPHSAP.

3-phosphoshikimate-binding residues include lysine 23, serine 24, and arginine 28. Lysine 23 serves as a coordination point for phosphoenolpyruvate. Residues glycine 97 and arginine 125 each coordinate phosphoenolpyruvate. 7 residues coordinate 3-phosphoshikimate: serine 170, serine 171, glutamine 172, serine 198, aspartate 314, asparagine 338, and lysine 342. Residue glutamine 172 coordinates phosphoenolpyruvate. Aspartate 314 functions as the Proton acceptor in the catalytic mechanism. Phosphoenolpyruvate contacts are provided by arginine 346, arginine 388, and lysine 413.

The protein belongs to the EPSP synthase family. As to quaternary structure, monomer.

The protein localises to the cytoplasm. The catalysed reaction is 3-phosphoshikimate + phosphoenolpyruvate = 5-O-(1-carboxyvinyl)-3-phosphoshikimate + phosphate. It participates in metabolic intermediate biosynthesis; chorismate biosynthesis; chorismate from D-erythrose 4-phosphate and phosphoenolpyruvate: step 6/7. In terms of biological role, catalyzes the transfer of the enolpyruvyl moiety of phosphoenolpyruvate (PEP) to the 5-hydroxyl of shikimate-3-phosphate (S3P) to produce enolpyruvyl shikimate-3-phosphate and inorganic phosphate. This Sodalis glossinidius (strain morsitans) protein is 3-phosphoshikimate 1-carboxyvinyltransferase.